The sequence spans 84 residues: uncharacterized protein (84 aa).

A run of 2 helical transmembrane segments spans residues 7 to 27 (HVNF…ILCI) and 52 to 72 (ITII…INPC).

The protein resides in the membrane. This is an uncharacterized protein from Saccharomyces cerevisiae (strain ATCC 204508 / S288c) (Baker's yeast).